We begin with the raw amino-acid sequence, 422 residues long: SPbeta prophage-derived glycosyltransferase SunS (422 aa).

It belongs to the glycosyltransferase 2 family.

Its function is as follows. Transfers a hexose moiety onto 'Cys-41' of bacteriocin sublancin-168 (SunA). Accepts UDP-glucose (UDP-Glc), UDP-N-acetylglucosamine (UDP-GlcNAc), UDP-galactose (UDP-Gal), UDP-xylose (UDP-Xyl) and GDP-mannose as substrate. This is SPbeta prophage-derived glycosyltransferase SunS (sunS) from Bacillus subtilis (strain 168).